Here is a 552-residue protein sequence, read N- to C-terminus: Cleavage and polyadenylation specificity factor subunit 6 (552 aa).

Residues 1-213 are necessary for interaction with NXF1; it reads MADGVDHIDI…RGRFPGAVPG (213 aa). Residues 81 to 161 enclose the RRM domain; that stretch reads IALYIGNLTR…QNPVVTPCNK (81 aa). The segment at 81–161 is necessary for interaction with NUDT21/CPSF5; that stretch reads IALYIGNLTR…QNPVVTPCNK (81 aa). The tract at residues 81–161 is necessary for nuclear paraspeckles localization; it reads IALYIGNLTR…QNPVVTPCNK (81 aa). Residue Thr-157 is modified to Phosphothreonine. The span at 169 to 180 shows a compositional bias: polar residues; it reads MQSRKTTQSGQM. Disordered stretches follow at residues 169-411 and 479-552; these read MQSR…PLSE and GIES…YRHR. A GAR motif is present at residues 202 to 206; that stretch reads RGRGR. Low complexity predominate over residues 207 to 219; it reads FPGAVPGGDRFPG. 3 stretches are compositionally biased toward pro residues: residues 220 to 265, 285 to 366, and 377 to 388; these read PTGP…PLAG, GQPP…PPPT, and GPPPTDPYGRPP. Residues 389 to 404 are compositionally biased toward basic and acidic residues; that stretch reads PYDRGDYGPPGREMDT. Phosphothreonine occurs at positions 404 and 407. Residues 404 to 552 form a sufficient for nuclear speckle localization region; the sequence is TARTPLSEAE…RDREREYRHR (149 aa). Positions 405–552 are necessary for RNA-binding; the sequence is ARTPLSEAEF…RDREREYRHR (148 aa). Residues 481 to 552 are necessary for interaction with SRSF3, SRSF7 and TRA2B/SFRS10; the sequence is ESKSYGSGSR…RDREREYRHR (72 aa). The segment at 491 to 552 is arg/Ser-rich domain; that stretch reads RRERSRERDH…RDREREYRHR (62 aa). Residues 494 to 504 are compositionally biased toward basic and acidic residues; sequence RSRERDHSRSR. A phosphoserine mark is found at Ser-495, Ser-501, Ser-512, Ser-514, and Ser-526. Over residues 505-515 the composition is skewed to basic residues; that stretch reads EKSRRHKSRSR. Residues 511–552 are sufficient for nuclear targeting; it reads KSRSRDRHDDYYRERSRERERHRDRDRDRDRERDREREYRHR. Residues 516–552 show a composition bias toward basic and acidic residues; the sequence is DRHDDYYRERSRERERHRDRDRDRDRERDREREYRHR.

It belongs to the RRM CPSF6/7 family. In terms of assembly, component of the cleavage factor Im (CFIm) complex which is a heterotetramer composed of two subunits of NUDT21/CPSF5 and two subunits of CPSF6 or CPSF7 or a heterodimer of CPSF6 and CPSF7. The cleavage factor Im (CFIm) complex associates with the CPSF and CSTF complexes to promote the assembly of the core mRNA 3'-processing machinery. Associates with the exon junction complex (EJC). Associates with the 80S ribosome particle. Interacts (via the RRM domain) with NUDT21/CPSF5; this interaction is direct and enhances binding to RNA. Interacts (via Arg/Ser-rich domain) with FIP1L1 (preferentially via unphosphorylated form and Arg/Glu/Asp-rich domain); this interaction mediates, at least in part, the interaction between the CFIm and CPSF complexes and may be inhibited by CPSF6 hyper-phosphorylation. Interacts (via N-terminus) with NXF1; this interaction is direct. Interacts with SRSF3. Interacts with SRSF7. Interacts with SNRNP70. Interacts with TRA2B/SFRS10. Interacts with UPF1. Interacts with UPF3B. Interacts with VIRMA. Interacts (via Arg/Ser-rich domain) with TNPO3; promoting nuclear import of CPSF6 independently of its phosphorylation status. Interacts with YTHDC1. Phosphorylated. Phosphorylated in the Arg/Ser-rich domain by SRPK1, in vitro. Post-translationally, symmetrically dimethylated on arginine residues in the GAR motif by PRMT5 in a WDR77- and CLNS1A-dependent manner. Asymmetrically dimethylated on arginine residues in the GAR motif by PRMT1.

It is found in the nucleus. The protein resides in the nucleoplasm. The protein localises to the nucleus speckle. Its subcellular location is the cytoplasm. Functionally, component of the cleavage factor Im (CFIm) complex that functions as an activator of the pre-mRNA 3'-end cleavage and polyadenylation processing required for the maturation of pre-mRNA into functional mRNAs. CFIm contributes to the recruitment of multiprotein complexes on specific sequences on the pre-mRNA 3'-end, so called cleavage and polyadenylation signals (pA signals). Most pre-mRNAs contain multiple pA signals, resulting in alternative cleavage and polyadenylation (APA) producing mRNAs with variable 3'-end formation. The CFIm complex acts as a key regulator of cleavage and polyadenylation site choice during APA through its binding to 5'-UGUA-3' elements localized in the 3'-untranslated region (UTR) for a huge number of pre-mRNAs. CPSF6 enhances NUDT21/CPSF5 binding to 5'-UGUA-3' elements localized upstream of pA signals and promotes RNA looping, and hence activates directly the mRNA 3'-processing machinery. Plays a role in mRNA export. The polypeptide is Cleavage and polyadenylation specificity factor subunit 6 (Pongo abelii (Sumatran orangutan)).